We begin with the raw amino-acid sequence, 119 residues long: Phospholipase A2 A2-actitoxin-Cgg2a (119 aa).

6 disulfide bridges follow: Cys-25–Cys-119, Cys-27–Cys-43, Cys-42–Cys-101, Cys-49–Cys-94, Cys-61–Cys-87, and Cys-78–Cys-92. 2 residues coordinate Ca(2+): Gly-28 and Gly-30. His-46 is a catalytic residue. Asp-47 contacts Ca(2+). Asp-95 is a catalytic residue.

It belongs to the phospholipase A2 family. Homodimer. It depends on Ca(2+) as a cofactor.

The protein localises to the secreted. It is found in the nematocyst. It catalyses the reaction a 1,2-diacyl-sn-glycero-3-phosphocholine + H2O = a 1-acyl-sn-glycero-3-phosphocholine + a fatty acid + H(+). Sea anemone phospholipase A2 (PLA2). When incubated with plasma, this protein shows a moderate anticoagulant activity (0.15 ug of enzyme/200 uL of plasma), inhibiting clotting induced by thrombin. This enzyme also induces myotoxicity, and edema. PLA2 catalyzes the calcium-dependent hydrolysis of the 2-acyl groups in 3-sn-phosphoglycerides. This Condylactis gigantea (Giant Caribbean anemone) protein is Phospholipase A2 A2-actitoxin-Cgg2a.